A 285-amino-acid polypeptide reads, in one-letter code: 33 kDa chaperonin (285 aa).

Cystine bridges form between cysteine 228–cysteine 230 and cysteine 261–cysteine 264.

It belongs to the HSP33 family. In terms of processing, under oxidizing conditions two disulfide bonds are formed involving the reactive cysteines. Under reducing conditions zinc is bound to the reactive cysteines and the protein is inactive.

Its subcellular location is the cytoplasm. Functionally, redox regulated molecular chaperone. Protects both thermally unfolding and oxidatively damaged proteins from irreversible aggregation. Plays an important role in the bacterial defense system toward oxidative stress. The polypeptide is 33 kDa chaperonin (Hahella chejuensis (strain KCTC 2396)).